A 187-amino-acid chain; its full sequence is Elongation factor P (187 aa).

This sequence belongs to the elongation factor P family.

Its subcellular location is the cytoplasm. It functions in the pathway protein biosynthesis; polypeptide chain elongation. Functionally, involved in peptide bond synthesis. Stimulates efficient translation and peptide-bond synthesis on native or reconstituted 70S ribosomes in vitro. Probably functions indirectly by altering the affinity of the ribosome for aminoacyl-tRNA, thus increasing their reactivity as acceptors for peptidyl transferase. This Helicobacter pylori (strain J99 / ATCC 700824) (Campylobacter pylori J99) protein is Elongation factor P (efp).